The chain runs to 113 residues: Ig kappa chain V-II region MOPC 511 (113 aa).

Residues 1-23 (DIVITQDELSKPVTSGESVSISC) form a framework-1 region. Cys23 and Cys93 are oxidised to a cystine. The interval 24 to 39 (RSSKSLLYKDGKTYLN) is complementarity-determining-1. The tract at residues 40-54 (WFLQGPQQSPRLLIY) is framework-2. Residues 55–61 (LMSTRAS) are complementarity-determining-2. The segment at 62–93 (GVSDRFSGSGSGTDFTLEISRVKAEDVGVYYC) is framework-3. The segment at 94-102 (QQLVEYPLT) is complementarity-determining-3. A framework-4 region spans residues 103–112 (FGAGTKLELK).

This is Ig kappa chain V-II region MOPC 511 from Mus musculus (Mouse).